The following is a 78-amino-acid chain: Defensin beta 136 (78 aa).

An N-terminal signal peptide occupies residues 1 to 21 (MNLCLSSLLFFLVILLPSGKG). 3 cysteine pairs are disulfide-bonded: Cys33/Cys60, Cys40/Cys54, and Cys44/Cys61.

Belongs to the beta-defensin family.

It localises to the secreted. Functionally, host defense peptide that exhibits antimicrobial and antifungal activity. Exhibits antimicrobial activity against E.coli, S.aureus and C.albicans (in vitro). Has high lipopolysaccharide (LPS)-binding affinity, and may thereby be involved in immunoregulation through LPS neutralization. The protein is Defensin beta 136 (DEFB136) of Pan troglodytes (Chimpanzee).